Consider the following 257-residue polypeptide: 4-diphosphocytidyl-2-C-methyl-D-erythritol kinase (257 aa).

Lysine 8 is an active-site residue. ATP is bound at residue 91–101 (PMGGGLGGGSA). Aspartate 131 is an active-site residue.

Belongs to the GHMP kinase family. IspE subfamily.

The catalysed reaction is 4-CDP-2-C-methyl-D-erythritol + ATP = 4-CDP-2-C-methyl-D-erythritol 2-phosphate + ADP + H(+). The protein operates within isoprenoid biosynthesis; isopentenyl diphosphate biosynthesis via DXP pathway; isopentenyl diphosphate from 1-deoxy-D-xylulose 5-phosphate: step 3/6. In terms of biological role, catalyzes the phosphorylation of the position 2 hydroxy group of 4-diphosphocytidyl-2C-methyl-D-erythritol. The chain is 4-diphosphocytidyl-2-C-methyl-D-erythritol kinase from Petrotoga mobilis (strain DSM 10674 / SJ95).